The primary structure comprises 1189 residues: MYIKSIVLEGFKSYAQRTEIRDFDPLFNAITGLNGSGKSNILDSICFLLGISNLSQVRASSLQDLVYKNGQAGVNKATVSITFDNSDKKNSPLGFENNDEITITRQVIVGGRNKYLINGMNASNNRVQDLFGSVGLNVNNPHFLIMQGQITKVLNMKPTEILAMIEEAAGTRMYECKKITAHKTIEKKESKLDEIRRIITEEISPTLEKLKEARASYLEYQKMTREVENLRRIYVAFQYVRAEEIKDRSTNALKEAQANKKKIFESMAENEKKVKELAQQIEETEKKNNEEFGAKLHSLEAAFSELQRVDAKVRSDLDHRKQNLNSEENRLKELIKIMQEEFKAFTSKEKEIKKIKEGLNGLQEESKKDAEALASAQQHFNAVSAGLSSNDSGQGTSLADQMMTCKNEISKAATEAKQAQMKLKYAQQELKTKQAEVKKMDGSYKEDQEAFEAIRKTKEKLQDEMKKLKYEEAEQEAHLAKKKQLSSEISSLRELCESIEAKHPYLRFEYKNPEKNWNPNCVKGLVVTLITVKDISTSKALEAVAGGKLYNIVVDTEATGKKILEKGQLKHRYTIIPLSKISANSIGHEIISLAKNLIGHREVHIAISLIDYNSELQKAMEYVFGTTLVCSSMDNAKKVTFDKRIMRKTVTLQGDIFDPQGTLSGGASSHVTPILSKLKTMRDAEDELKIKTSQLEATEKELANLKNMAEKYQHLKQQWEMKSEEAELLQTKIQQSAYHKQQEDLLALKKTIAECEETLKKTEESQRKAEEEYKALENKMKNAEAERGKEIKNAQQKLNSAKKKADDSSRKMKEKQQEVEALVLELEQLKQEQASYKQQSEAAQQAIASLKEQVSALEAEAVKTRESLKNAENELSSEKGLMEERTKDIKAKSAKIEKYREQNNELQLSINALEHDINKYQQETADASSTLDKLLKEYKWIASEKELFGQADTTYDFEANNPKETGQKLQKLLTKKEKLEKSLNMRAMNLLSEAEERYNDLMKKKRMVENDKIKILATIEELDRKKNKALHIAWEKVNKDFGSIFSMLLPGAKAMLVPSKKQNILDGLEFRVGLGDIWKENLTELSGGQRSLAALSLILAILLFKPAPIYILDEVDAALDLSHTQNIGQMLHAHFKQSQFLVVSLKDGMFNNANVLYRTKFVDGISTVSRHCQLKKKQPLSEASNNKDE.

An ATP-binding site is contributed by 32 to 39; it reads GLNGSGKS. Residues 211 to 503 are a coiled coil; it reads KEARASYLEY…ELCESIEAKH (293 aa). Residues 522–639 enclose the SMC hinge domain; sequence VKGLVVTLIT…CSSMDNAKKV (118 aa). Residues 674 to 1030 are a coiled coil; that stretch reads ILSKLKTMRD…ELDRKKNKAL (357 aa). Composition is skewed to basic and acidic residues over residues 782 to 792 and 803 to 814; these read NAEAERGKEIK and KKADDSSRKMKE. 2 disordered regions span residues 782-814 and 867-886; these read NAEA…KMKE and SLKN…EERT.

Belongs to the SMC family. SMC2 subfamily. In terms of assembly, forms a heterodimer with SMC4. Component of the condensin complex, which contains the SMC2 and SMC4 heterodimer, and probably some non SMC subunits that regulate the complex.

The protein resides in the nucleus. It is found in the cytoplasm. It localises to the chromosome. Functionally, central component of the condensin complex, a complex required for conversion of interphase chromatin into mitotic-like condense chromosomes. The condensin complex probably introduces positive supercoils into relaxed DNA in the presence of type I topoisomerases and converts nicked DNA into positive knotted forms in the presence of type II topoisomerases. The polypeptide is Structural maintenance of chromosomes protein 2 (SMC2) (Gallus gallus (Chicken)).